Reading from the N-terminus, the 520-residue chain is Apolipoprotein N-acyltransferase (520 aa).

7 consecutive transmembrane segments (helical) span residues 12–32, 33–53, 58–78, 93–113, 122–142, 168–188, and 193–213; these read IFTY…FSPF, DYWG…KTAE, LWSA…WVHV, VLVL…AYLI, AMFP…FTGF, VTFF…VLLI, and WNVV…SAYS. Residues 232–479 form the CN hydrolase domain; that stretch reads AQGNIEQNLK…ETTLTHKVAA (248 aa). Catalysis depends on glutamate 272, which acts as the Proton acceptor. Lysine 338 is an active-site residue. The Nucleophile role is filled by cysteine 390. Residues 484 to 504 traverse the membrane as a helical segment; that stretch reads TPYAVFGNTAIYGLSLLLLLM.

This sequence belongs to the CN hydrolase family. Apolipoprotein N-acyltransferase subfamily.

The protein localises to the cell inner membrane. The catalysed reaction is N-terminal S-1,2-diacyl-sn-glyceryl-L-cysteinyl-[lipoprotein] + a glycerophospholipid = N-acyl-S-1,2-diacyl-sn-glyceryl-L-cysteinyl-[lipoprotein] + a 2-acyl-sn-glycero-3-phospholipid + H(+). It participates in protein modification; lipoprotein biosynthesis (N-acyl transfer). Functionally, catalyzes the phospholipid dependent N-acylation of the N-terminal cysteine of apolipoprotein, the last step in lipoprotein maturation. The chain is Apolipoprotein N-acyltransferase from Pasteurella multocida (strain Pm70).